Here is a 608-residue protein sequence, read N- to C-terminus: UvrABC system protein C (608 aa).

Positions 22–100 constitute a GIY-YIG domain; sequence EKPGIYQYLN…IKKYKPRYNV (79 aa). The UVR domain maps to 214–249; the sequence is QEISRLLYQRMQDLAAEMKFEEAQKVKEKYALIENY.

Belongs to the UvrC family. In terms of assembly, interacts with UvrB in an incision complex.

It is found in the cytoplasm. Its function is as follows. The UvrABC repair system catalyzes the recognition and processing of DNA lesions. UvrC both incises the 5' and 3' sides of the lesion. The N-terminal half is responsible for the 3' incision and the C-terminal half is responsible for the 5' incision. The polypeptide is UvrABC system protein C (Bacteroides fragilis (strain ATCC 25285 / DSM 2151 / CCUG 4856 / JCM 11019 / LMG 10263 / NCTC 9343 / Onslow / VPI 2553 / EN-2)).